The primary structure comprises 237 residues: Lectin alpha chain (237 aa).

Mn(2+) is bound by residues glutamate 8 and aspartate 10. Positions 10, 12, 14, and 19 each coordinate Ca(2+). Tyrosine 12 contributes to the a carbohydrate binding site. Mn(2+) contacts are provided by aspartate 19, histidine 24, and serine 34. 99-100 contributes to the a carbohydrate binding site; that stretch reads LY. Aspartate 208 contacts Ca(2+). Arginine 228 lines the a carbohydrate pocket.

Belongs to the leguminous lectin family. As to quaternary structure, homotetramer. Post-translationally, the beta and gamma chains are produced by partial proteolytic processing of the lectin alpha chain by an asparaginyl endopeptidase. Mixture of 60% alpha lectin and 40% of its beta and gamma proteolytic fragments.

D-mannose/D-glucose-binding lectin. Has anti-inflammatory activity in rats. Induces histamine release in mast cells from rat. Induces lymphocyte proliferation and IFNG production. Shows toxicity against the aquatic snail B.glabrata at concentrations higher than 50 ug/ml. The protein is Lectin alpha chain of Dioclea grandiflora (Mucana).